The following is a 355-amino-acid chain: Lamassu protein LmuA (355 aa).

Component of antiviral defense system Lamassu type II, composed of LmuA and LmuB. Expression of Lamassu type II in B.subtilis (strain BEST7003) confers resistance to phage SpBeta. May be a nuclease. This Bacillus cereus (strain VD014) protein is Lamassu protein LmuA.